Reading from the N-terminus, the 641-residue chain is Tetracycline resistance protein TetS (641 aa).

The region spanning 1–242 (MKIINIGILA…VITSKLFSPT (242 aa)) is the tr-type G domain. GTP is bound by residues 10 to 17 (AHVDAGKT), 74 to 78 (DTPGH), and 128 to 131 (NKID).

It belongs to the TRAFAC class translation factor GTPase superfamily. Classic translation factor GTPase family. TetM/TetO subfamily.

Its function is as follows. Abolishes the inhibitory effect of tetracyclin on protein synthesis by a non-covalent modification of the ribosomes. In Listeria monocytogenes, this protein is Tetracycline resistance protein TetS (tetS).